The sequence spans 204 residues: Pyridoxal 5'-phosphate synthase subunit PdxT (204 aa).

52–54 (GES) is a binding site for L-glutamine. Cys84 (nucleophile) is an active-site residue. L-glutamine is bound by residues Arg116 and 143–144 (IR). Catalysis depends on charge relay system residues His184 and Glu186.

The protein belongs to the glutaminase PdxT/SNO family. In terms of assembly, in the presence of PdxS, forms a dodecamer of heterodimers. Only shows activity in the heterodimer.

The enzyme catalyses aldehydo-D-ribose 5-phosphate + D-glyceraldehyde 3-phosphate + L-glutamine = pyridoxal 5'-phosphate + L-glutamate + phosphate + 3 H2O + H(+). It catalyses the reaction L-glutamine + H2O = L-glutamate + NH4(+). It participates in cofactor biosynthesis; pyridoxal 5'-phosphate biosynthesis. Functionally, catalyzes the hydrolysis of glutamine to glutamate and ammonia as part of the biosynthesis of pyridoxal 5'-phosphate. The resulting ammonia molecule is channeled to the active site of PdxS. This chain is Pyridoxal 5'-phosphate synthase subunit PdxT, found in Pyrobaculum aerophilum (strain ATCC 51768 / DSM 7523 / JCM 9630 / CIP 104966 / NBRC 100827 / IM2).